We begin with the raw amino-acid sequence, 373 residues long: tRNA-specific 2-thiouridylase MnmA (373 aa).

ATP is bound by residues 12–19 and Met-38; that span reads GMSGGVDS. Residues 98 to 100 form an interaction with target base in tRNA region; that stretch reads NPD. Cys-103 functions as the Nucleophile in the catalytic mechanism. A disulfide bond links Cys-103 and Cys-200. Residue Gly-127 participates in ATP binding. The interval 150-152 is interaction with tRNA; sequence KDQ. Cys-200 functions as the Cysteine persulfide intermediate in the catalytic mechanism. An interaction with tRNA region spans residues 312 to 313; it reads RY.

Belongs to the MnmA/TRMU family.

Its subcellular location is the cytoplasm. The enzyme catalyses S-sulfanyl-L-cysteinyl-[protein] + uridine(34) in tRNA + AH2 + ATP = 2-thiouridine(34) in tRNA + L-cysteinyl-[protein] + A + AMP + diphosphate + H(+). Its function is as follows. Catalyzes the 2-thiolation of uridine at the wobble position (U34) of tRNA, leading to the formation of s(2)U34. This is tRNA-specific 2-thiouridylase MnmA from Streptococcus mutans serotype c (strain ATCC 700610 / UA159).